The following is a 282-amino-acid chain: MHTLKTLVLMVFLSVFFIFVGSLIGGKQGATFALIMALGMNFFAYFFSHKIVLAMYGAKEVSEAEAPELYNIVRRLAQKAELPMPKVYIIDSEQPNAFATGRSPKHGVVAVTTGIMRILSREELEGVIGHELAHIKHRDILISTIAATIAGAISYLAQMAMWANIFGGRHDDEEGGGHPIVALLMMIIAPLIAMIIQLAISRSREYAADEDGARIAGNPLYLSNALRKLHYASQAIPMDANPGTAHMFIVNPLSGKTLMKLFSTHPPIDERIARLEAMARRY.

2 helical membrane-spanning segments follow: residues 6-26 (TLVL…LIGG) and 29-49 (GATF…FFSH). His-130 contacts Zn(2+). Residue Glu-131 is part of the active site. His-134 contributes to the Zn(2+) binding site. The next 2 helical transmembrane spans lie at 140 to 160 (ILIS…AQMA) and 180 to 200 (IVAL…QLAI). Residue Glu-205 participates in Zn(2+) binding.

It belongs to the peptidase M48B family. Zn(2+) serves as cofactor.

It is found in the cell inner membrane. The polypeptide is Protease HtpX homolog (Thermodesulfovibrio yellowstonii (strain ATCC 51303 / DSM 11347 / YP87)).